Reading from the N-terminus, the 407-residue chain is Probable endo-beta-1,4-glucanase celB (407 aa).

Positions 1–18 (MAQTLAAASLVLVPLVTA) are cleaved as a signal peptide. Asn-136 is a glycosylation site (N-linked (GlcNAc...) asparagine). Glu-216 (nucleophile) is an active-site residue. The active-site Proton donor is Glu-221.

Belongs to the glycosyl hydrolase 7 (cellulase C) family.

Its subcellular location is the secreted. It carries out the reaction Endohydrolysis of (1-&gt;4)-beta-D-glucosidic linkages in cellulose, lichenin and cereal beta-D-glucans.. Its function is as follows. Has endoglucanase activity on substrates containing beta-1,4 glycosidic bonds, like in carboxymethylcellulose (CMC), hydroxyethylcellulose (HEC) and beta-glucan. Involved in the degradation of complex natural cellulosic substrates. This is Probable endo-beta-1,4-glucanase celB (celB) from Aspergillus fumigatus (strain ATCC MYA-4609 / CBS 101355 / FGSC A1100 / Af293) (Neosartorya fumigata).